The following is a 333-amino-acid chain: 5-formaminoimidazole-4-carboxamide-1-(beta)-D-ribofuranosyl 5'-monophosphate synthetase (333 aa).

5-amino-1-(5-phospho-beta-D-ribosyl)imidazole-4-carboxamide-binding residues include His10 and Ser74. The ATP-grasp domain maps to 95-324; the sequence is RNLFAWESNQ…ISREIRLALN (230 aa). ATP is bound by residues 125–185 and Glu207; that span reads VEDV…VPMY. Asn230 provides a ligand contact to 5-amino-1-(5-phospho-beta-D-ribosyl)imidazole-4-carboxamide. Mg(2+) is bound by residues Glu269 and Glu282.

The protein belongs to the phosphohexose mutase family. The cofactor is Mg(2+). It depends on Mn(2+) as a cofactor.

The catalysed reaction is 5-amino-1-(5-phospho-beta-D-ribosyl)imidazole-4-carboxamide + formate + ATP = 5-formamido-1-(5-phospho-D-ribosyl)imidazole-4-carboxamide + ADP + phosphate. The protein operates within purine metabolism; IMP biosynthesis via de novo pathway; 5-formamido-1-(5-phospho-D-ribosyl)imidazole-4-carboxamide from 5-amino-1-(5-phospho-D-ribosyl)imidazole-4-carboxamide (formate route): step 1/1. In terms of biological role, catalyzes the ATP- and formate-dependent formylation of 5-aminoimidazole-4-carboxamide-1-beta-d-ribofuranosyl 5'-monophosphate (AICAR) to 5-formaminoimidazole-4-carboxamide-1-beta-d-ribofuranosyl 5'-monophosphate (FAICAR) in the absence of folates. In Sulfolobus acidocaldarius (strain ATCC 33909 / DSM 639 / JCM 8929 / NBRC 15157 / NCIMB 11770), this protein is 5-formaminoimidazole-4-carboxamide-1-(beta)-D-ribofuranosyl 5'-monophosphate synthetase.